A 216-amino-acid polypeptide reads, in one-letter code: Flagellar transcriptional regulator FlhC (216 aa).

Zn(2+) is bound by residues C137, C140, C157, and C160.

It belongs to the FlhC family. In terms of assembly, heterohexamer composed of two FlhC and four FlhD subunits. Each FlhC binds a FlhD dimer, forming a heterotrimer, and a hexamer assembles by dimerization of two heterotrimers. Requires Zn(2+) as cofactor.

The protein resides in the cytoplasm. Its function is as follows. Functions in complex with FlhD as a master transcriptional regulator that regulates transcription of several flagellar and non-flagellar operons by binding to their promoter region. Activates expression of class 2 flagellar genes, including fliA, which is a flagellum-specific sigma factor that turns on the class 3 genes. Also regulates genes whose products function in a variety of physiological pathways. The sequence is that of Flagellar transcriptional regulator FlhC from Paraburkholderia atlantica.